Consider the following 311-residue polypeptide: Cyclin-dependent kinase B1-2 (311 aa).

Positions 4–303 constitute a Protein kinase domain; that stretch reads YEKLEKVGEG…AKAALDHPYF (300 aa). ATP contacts are provided by residues 10-18 and K33; that span reads VGEGTYGKV. Y15 bears the Phosphotyrosine mark. The Proton acceptor role is filled by D144. T178 bears the Phosphothreonine mark.

Belongs to the protein kinase superfamily. CMGC Ser/Thr protein kinase family. CDC2/CDKX subfamily. In terms of assembly, interacts with CKS1. In terms of tissue distribution, expressed in flowers.

The enzyme catalyses L-seryl-[protein] + ATP = O-phospho-L-seryl-[protein] + ADP + H(+). It carries out the reaction L-threonyl-[protein] + ATP = O-phospho-L-threonyl-[protein] + ADP + H(+). It catalyses the reaction [DNA-directed RNA polymerase] + ATP = phospho-[DNA-directed RNA polymerase] + ADP + H(+). Functionally, together with CDKB1-1, promotes both the last division in the stomatal cell lineage as well as the number of stomata. In collaboration with MYB124 and MYB88, restrict the G1/S transition and chloroplast and nuclear number during stomatal formation, and normally maintain fate and developmental progression throughout the stomatal cell lineage. The polypeptide is Cyclin-dependent kinase B1-2 (CDKB1-2) (Arabidopsis thaliana (Mouse-ear cress)).